A 212-amino-acid chain; its full sequence is Golgi SNAP receptor complex member 2 (212 aa).

Met1 carries the post-translational modification N-acetylmethionine. The Cytoplasmic segment spans residues 1–190 (MDPLFQQTHK…LIEKRAFQDK (190 aa)). Residues 61–107 (NKRQNARLRVDQLKYDVQHLQTALRNFQHRRHAREQQERQREELLSR) adopt a coiled-coil conformation. An IxM motif; signal for cargo packaging into COPII-coated vesicles motif is present at residues 118–120 (IPM). A helical; Anchor for type IV membrane protein membrane pass occupies residues 191 to 211 (YFMIGGMLLTCVVMFLVVQYL). Position 212 (Thr212) is a topological domain, vesicular.

It belongs to the GOSR2 family. Part of a unique SNARE complex composed of the Golgi SNAREs GOSR1, STX5 and YKT6. Interacts (via IxM motif) with SEC24C and SEC24D; mediates GOSR2 packaging into COPII-coated vesicles. Interacts with BET1.

It localises to the golgi apparatus. Its subcellular location is the cis-Golgi network membrane. The protein resides in the golgi apparatus membrane. The protein localises to the endoplasmic reticulum membrane. In terms of biological role, involved in transport of proteins from the cis/medial-Golgi to the trans-Golgi network. In Homo sapiens (Human), this protein is Golgi SNAP receptor complex member 2 (GOSR2).